Consider the following 125-residue polypeptide: Oxytocin-neurophysin 1 (125 aa).

An N-terminal signal peptide occupies residues 1–19 (MAGSSLACCLLGLLALTSA). Cys-20 and Cys-25 form a disulfide bridge. A Glycine amide modification is found at Gly-28. Intrachain disulfides connect Cys-41–Cys-85, Cys-44–Cys-58, Cys-52–Cys-75, Cys-59–Cys-65, Cys-92–Cys-104, Cys-98–Cys-116, and Cys-105–Cys-110.

This sequence belongs to the vasopressin/oxytocin family. Interacts with oxytocin receptor (Ki=1.5 nM). Interacts with vasopressin V1aR/AVPR1A (Ki=37 nM), V1bR/AVPR1B (Ki=222 nM), and V2R/AVPR2 receptors (Ki=823 nM).

The protein localises to the secreted. Its function is as follows. Neurophysin 1 specifically binds oxytocin. Functionally, oxytocin causes contraction of the smooth muscle of the uterus and of the mammary gland. Acts by binding to oxytocin receptor (OXTR). This Bos taurus (Bovine) protein is Oxytocin-neurophysin 1 (OXT).